A 100-amino-acid polypeptide reads, in one-letter code: DNA-directed RNA polymerase subunit Rpo11 (100 aa).

The protein belongs to the archaeal Rpo11/eukaryotic RPB11/RPC19 RNA polymerase subunit family. Part of the RNA polymerase complex.

Its subcellular location is the cytoplasm. It carries out the reaction RNA(n) + a ribonucleoside 5'-triphosphate = RNA(n+1) + diphosphate. Functionally, DNA-dependent RNA polymerase (RNAP) catalyzes the transcription of DNA into RNA using the four ribonucleoside triphosphates as substrates. In Picrophilus torridus (strain ATCC 700027 / DSM 9790 / JCM 10055 / NBRC 100828 / KAW 2/3), this protein is DNA-directed RNA polymerase subunit Rpo11.